Reading from the N-terminus, the 977-residue chain is MSQTPSSLRDLEHHSAFVERHIGPNDAEIAQMLDVVGHASLDALTDAIVPGNIKSPAPLALPEAITEEEALAKIRAIASKNQVQRNFIGQGYYGTHTPKVILRNILENPAWYTAYTPYQAEISQGRMEALINFQTLCADLTGMQIANASLLDEATAAAEAMTLAKRSAKSKSNTFFVHDAVHPQTLELLRTRAEPLDIVLRVGTPEEALQAECFGVLLQYPDSFGHIGDHAALADAVHAQGGLVAVATDLLALTLIAAPGEWGADIVVGNSQRFGVPFGFGGPHAAFMACRDAYKRSMPGRLIGVSIDAAGNPAYRLTLQTREQHIRREKATSNICTAQVLLAVMASMYAVYHGPDGLVRIARRTHRLAAILAAALRSAGVSVGDRFFDTLHVKAIDADAIHARARAAGINLRAIDSEAVGISLDETTTRADVVALAQLFGATADVDALDAATADALPQGLLRTTPFLTHPVFNTHHSEHELLRYMRSLADKDLAMDRTMIPLGSCTMKLNATAEMIPVTWPEFGAIHPLAPAEQSAGYAQLIDELEAMLVECTGYDAVSLQPNSGAQGEYAGLLAIRAYHRSRGQAHRDICLIPESAHGTNPASAQMCGMTVVVTKCDANGNVDVDDIRAKAEKYSDRLAALMITYPSTHGVFEEDVVAICEAVHAHGGQVYTDGANMNALVGVAKPGKWGSDVSHLNLHKTFCIPHGGGGPGVGPCAVKSHLAPYLPRAGIHAGEGQTAAIHGGGFNSESGNGHSSRIGGMVSAAAYGSASILPISWMYVTMMGSAGLRKATQVALLNANYIAKRLAPHYKTLYTGRNGLVAHECILDVRPLEKTSGIGAEDIAKRLIDFGFHAPTLSFPVAGTLMVEPTESESQHELDRFIDAMIQIREEIRAIEDGRLDREDNPLKHAPHTATQVSASEWTHAYPRELAAFPLPSLKQQKYWPPVARVDNVYGDKNVMCACIPVDAYKEDAEA.

N6-(pyridoxal phosphate)lysine is present on lysine 702.

This sequence belongs to the GcvP family. As to quaternary structure, the glycine cleavage system is composed of four proteins: P, T, L and H. Requires pyridoxal 5'-phosphate as cofactor.

It catalyses the reaction N(6)-[(R)-lipoyl]-L-lysyl-[glycine-cleavage complex H protein] + glycine + H(+) = N(6)-[(R)-S(8)-aminomethyldihydrolipoyl]-L-lysyl-[glycine-cleavage complex H protein] + CO2. In terms of biological role, the glycine cleavage system catalyzes the degradation of glycine. The P protein binds the alpha-amino group of glycine through its pyridoxal phosphate cofactor; CO(2) is released and the remaining methylamine moiety is then transferred to the lipoamide cofactor of the H protein. This is Glycine dehydrogenase (decarboxylating) from Xanthomonas axonopodis pv. citri (strain 306).